Reading from the N-terminus, the 168-residue chain is Monothiol glutaredoxin-S7, chloroplastic (168 aa).

Residues 1 to 54 (MAATAAASVAAISPLPGASLPRPVSARVPLLPRASPPTWRLSVGSARARSTRCL) constitute a chloroplast transit peptide. The 102-residue stretch at 67–168 (RATLDKVVGS…QETLEKAMLS (102 aa)) folds into the Glutaredoxin domain. Lys84 provides a ligand contact to glutathione. Cys92 is a binding site for [2Fe-2S] cluster. Residues Arg121, Phe133, and 146–147 (CD) contribute to the glutathione site.

The protein belongs to the glutaredoxin family. CGFS subfamily.

The protein resides in the plastid. The protein localises to the chloroplast. Its function is as follows. May only reduce GSH-thiol disulfides, but not protein disulfides. In Oryza sativa subsp. japonica (Rice), this protein is Monothiol glutaredoxin-S7, chloroplastic (GRXS7).